The chain runs to 190 residues: Transcription termination/antitermination protein NusG (190 aa).

Positions 141-165 constitute a KOW domain; it reads GDMVRVTSGPFADFSGVVSEVNAPQ.

It belongs to the NusG family.

Participates in transcription elongation, termination and antitermination. The polypeptide is Transcription termination/antitermination protein NusG (Deinococcus radiodurans (strain ATCC 13939 / DSM 20539 / JCM 16871 / CCUG 27074 / LMG 4051 / NBRC 15346 / NCIMB 9279 / VKM B-1422 / R1)).